A 501-amino-acid chain; its full sequence is Tetrachloroethene reductive dehalogenase (501 aa).

Residues 1–37 (MEKKKKPELSRRDFGKLIIGGGAAATIAPFGVPGANA) constitute a signal peptide (tat-type signal). Residues alanine 74, tyrosine 207, 309–314 (NGVGQS), 329–332 (MGAC), and 341–343 (VRL) contribute to the corrinoid site. Residues 356-386 (KPIDFGVTEFCETCKKCARECPSKAITEGPR) form the 4Fe-4S ferredoxin-type 1 domain. Residues cysteine 366, cysteine 369, cysteine 372, and cysteine 376 each contribute to the [4Fe-4S] cluster site. 394-401 (HNQSGKLQ) contacts corrinoid. Residue cysteine 409 coordinates [4Fe-4S] cluster. Tyrosine 419 is a binding site for corrinoid. [4Fe-4S] cluster contacts are provided by cysteine 420, cysteine 423, and cysteine 427. One can recognise a 4Fe-4S ferredoxin-type 2 domain in the interval 420–439 (CGVCVAVCPFTKGNIWIHDG).

This sequence belongs to the PceA family. As to quaternary structure, monomer. Requires [4Fe-4S] cluster as cofactor. Corrinoid is required as a cofactor. In terms of processing, predicted to be exported by the Tat system. The position of the signal peptide cleavage has not been experimentally proven.

The protein resides in the cytoplasm. The protein localises to the cell inner membrane. It catalyses the reaction trichloroethene + chloride + A + H(+) = tetrachloroethene + AH2. The catalysed reaction is trichloroethene + AH2 = (Z)-1,2-dichloroethene + chloride + A + H(+). Both the processed and unprocessed enzymes are catalytically active. PCE-dependent growth and PceA activity are inhibited in the presence of high concentrations of 5,6-dimethylbenzimidazole (DMB), probably due to the formation a DMB-containing nor-B12 cofactor. Dechlorination of PCE is stimulated by ammonium ions. Activity is inhibited by chlorinated methanes. Catalyzes the reductive dechlorination of tetrachloroethene (PCE) to trichloroethene (TCE) and of trichloroethene to cis-1,2-dichloroethene (DCE). In addition, trans-1,3-dichloropropene, 1,1,3-trichloropropene and 2,3-dichloropropene are reduced to a mixture of mono-chloropropenes, 1,1-dichloropropene, and 2-chloropropene, respectively. Is also able to convert brominated phenols such as 4-bromophenol (4-BP), 2,4-dibromophenol (2,4-DBP) and 2,4,6-tribromophenol (2,4,6-TBP). Utilizes formate or pyruvate as electron donors. Titanium(III) citrate could also serve as electron donor. Reduced methyl viologen can act as the artificial electron donor. This chain is Tetrachloroethene reductive dehalogenase, found in Sulfurospirillum multivorans (Dehalospirillum multivorans).